The primary structure comprises 118 residues: NADH dehydrogenase [ubiquinone] iron-sulfur protein 5-A (118 aa).

Positions 46–87 (KGRCYDFWMDFSECMSHCREPKDCTLLREDYLECLHHSKEFQ) constitute a CHCH domain. 2 consecutive short sequence motifs (cx9C motif) follow at residues 49 to 59 (CYDFWMDFSEC) and 69 to 79 (CTLLREDYLEC). 2 cysteine pairs are disulfide-bonded: Cys49–Cys79 and Cys59–Cys69. Residues 98-118 (RKLRAASRKGEEAGDGTHNHH) are disordered.

It belongs to the complex I NDUFS5 subunit family. In terms of assembly, complex I is composed of at least 49 different subunits. This is a component of the iron-sulfur (IP) fragment of the enzyme.

Its subcellular location is the mitochondrion. It localises to the mitochondrion inner membrane. It is found in the mitochondrion intermembrane space. Functionally, accessory subunit of the mitochondrial membrane respiratory chain NADH dehydrogenase (Complex I), that is believed not to be involved in catalysis. Complex I functions in the transfer of electrons from NADH to the respiratory chain. The immediate electron acceptor for the enzyme is believed to be ubiquinone. The polypeptide is NADH dehydrogenase [ubiquinone] iron-sulfur protein 5-A (Arabidopsis thaliana (Mouse-ear cress)).